The following is a 429-amino-acid chain: Glutamate-1-semialdehyde 2,1-aminomutase 2 (429 aa).

At lysine 268 the chain carries N6-(pyridoxal phosphate)lysine.

The protein belongs to the class-III pyridoxal-phosphate-dependent aminotransferase family. HemL subfamily. In terms of assembly, homodimer. The cofactor is pyridoxal 5'-phosphate.

Its subcellular location is the cytoplasm. The enzyme catalyses (S)-4-amino-5-oxopentanoate = 5-aminolevulinate. Its pathway is porphyrin-containing compound metabolism; protoporphyrin-IX biosynthesis; 5-aminolevulinate from L-glutamyl-tRNA(Glu): step 2/2. The sequence is that of Glutamate-1-semialdehyde 2,1-aminomutase 2 from Staphylococcus aureus (strain Mu50 / ATCC 700699).